We begin with the raw amino-acid sequence, 222 residues long: Small ribosomal subunit protein eS1 (222 aa).

This sequence belongs to the eukaryotic ribosomal protein eS1 family.

The chain is Small ribosomal subunit protein eS1 from Pyrobaculum calidifontis (strain DSM 21063 / JCM 11548 / VA1).